We begin with the raw amino-acid sequence, 286 residues long: Myb family transcription factor PHL7 (286 aa).

One can recognise an HTH myb-type domain in the interval 12–72; sequence HASKQRLRWT…HLQKYRLAKY (61 aa). The segment at residues 43-68 is a DNA-binding region (H-T-H motif); sequence PKGVLRVMGVQGLTIYHVKSHLQKYR. Positions 74 to 97 are disordered; the sequence is PDSSSEGKKTDKKESGDMLSGLDG. Residues 78–89 show a composition bias toward basic and acidic residues; the sequence is SEGKKTDKKESG. A coiled-coil region spans residues 104 to 124; that stretch reads TEALKLQMEVQKRLHEQLEVQ. Positions 117–122 match the LHEQLE motif; the sequence is LHEQLE. The disordered stretch occupies residues 152 to 227; the sequence is LGEPSAPVTG…TGEERLSKKP (76 aa).

It belongs to the MYB-CC family.

Its subcellular location is the nucleus. The protein is Myb family transcription factor PHL7 of Arabidopsis thaliana (Mouse-ear cress).